We begin with the raw amino-acid sequence, 205 residues long: Thymidylate kinase (205 aa).

An ATP-binding site is contributed by 10-17; sequence GIDGAGKS.

It belongs to the thymidylate kinase family.

It catalyses the reaction dTMP + ATP = dTDP + ADP. In terms of biological role, phosphorylation of dTMP to form dTDP in both de novo and salvage pathways of dTTP synthesis. This chain is Thymidylate kinase, found in Ralstonia pickettii (strain 12J).